Here is a 354-residue protein sequence, read N- to C-terminus: Serum paraoxonase/arylesterase 2 (354 aa).

Cys-42 and Cys-352 form a disulfide bridge. Positions 53 and 54 each coordinate Ca(2+). Residue His-114 is the Proton acceptor of the active site. Positions 116, 167, 168, and 223 each coordinate Ca(2+). N-linked (GlcNAc...) asparagine glycosylation occurs at Asn-254. Residues Asp-268 and Asn-269 each coordinate Ca(2+). Residues Asn-269 and Asn-323 are each glycosylated (N-linked (GlcNAc...) asparagine).

This sequence belongs to the paraoxonase family. As to quaternary structure, homotrimer. Ca(2+) is required as a cofactor. In terms of processing, glycosylated. Post-translationally, the signal sequence is not cleaved.

The protein resides in the membrane. The enzyme catalyses a phenyl acetate + H2O = a phenol + acetate + H(+). The catalysed reaction is an N-acyl-L-homoserine lactone + H2O = an N-acyl-L-homoserine + H(+). Capable of hydrolyzing lactones and a number of aromatic carboxylic acid esters. This chain is Serum paraoxonase/arylesterase 2 (PON2), found in Canis lupus familiaris (Dog).